The following is a 358-amino-acid chain: Polyadenylate-binding protein-interacting protein 11 (358 aa).

Residues 1-19 are compositionally biased toward low complexity; that stretch reads MAVVETGAAATAADAGGVV. Positions 1–45 are disordered; sequence MAVVETGAAATAADAGGVVIQPPPSSPPSSMTSQDSGVSSDDQNH. Positions 31–41 are enriched in polar residues; sequence MTSQDSGVSSD. The short motif at 92 to 102 is the PAM2-like element; it reads KLNPMAEEFVP. Residues 136-164 form a disordered region; it reads GGYGNENGGFRRKKSFGQGKRRMNARTSM. The span at 145-159 shows a compositional bias: basic residues; sequence FRRKKSFGQGKRRMN. The Bipartite nuclear localization signal motif lies at 146 to 157; that stretch reads RRKKSFGQGKRR. RRM domains are found at residues 173-248 and 270-346; these read RTVY…PSKT and RTIY…PSKT.

As to expression, expressed in cauline leaves, stems, immature siliques and primary inflorescences.

Its subcellular location is the nucleus. This is Polyadenylate-binding protein-interacting protein 11 (CID11) from Arabidopsis thaliana (Mouse-ear cress).